The sequence spans 332 residues: MQVSNFLKPRIVDVQRINDYATKVTLEPLERGFGHTLGNALRRILLSSMPGCAIIEAQIDGVLHEYTTKEGVQEDMTEILLNLKGVAVKLHGRDEVTLNLSSKGPVTVTAGDIQLEHDVEVINPEHVIAHLTKSGELNLTMKVVRGRGYQSASMRIPKEEDERSIGHLILDASFSPIRRVTYEVDSARVEQRTDLDKLIIEIETNGTIAPDEAVRKAATILQDQLTAFVELEGKIETAKEKKAAEIDPVLLQPIDDLELTVRSANCLKAENIYYIGDLIQKTEVELLKTPNLGKKSLTEIKDVLTLRGLSLGMRLENWPPAGLREEETKVTA.

An alpha N-terminal domain (alpha-NTD) region spans residues 1–232 (MQVSNFLKPR…DQLTAFVELE (232 aa)). Positions 246 to 332 (IDPVLLQPID…LREEETKVTA (87 aa)) are alpha C-terminal domain (alpha-CTD).

Belongs to the RNA polymerase alpha chain family. In terms of assembly, homodimer. The RNAP catalytic core consists of 2 alpha, 1 beta, 1 beta' and 1 omega subunit. When a sigma factor is associated with the core the holoenzyme is formed, which can initiate transcription.

It catalyses the reaction RNA(n) + a ribonucleoside 5'-triphosphate = RNA(n+1) + diphosphate. In terms of biological role, DNA-dependent RNA polymerase catalyzes the transcription of DNA into RNA using the four ribonucleoside triphosphates as substrates. This is DNA-directed RNA polymerase subunit alpha from Nitrosococcus oceani (strain ATCC 19707 / BCRC 17464 / JCM 30415 / NCIMB 11848 / C-107).